A 319-amino-acid chain; its full sequence is Putative replication factor C small subunit R395 (319 aa).

45–52 is an ATP binding site; the sequence is GSPGVGKT.

Belongs to the activator 1 small subunits family. RfcS subfamily.

In terms of biological role, part of the RFC clamp loader complex which loads the PCNA sliding clamp onto DNA. The chain is Putative replication factor C small subunit R395 from Acanthamoeba polyphaga mimivirus (APMV).